The primary structure comprises 961 residues: Lon protease homolog, mitochondrial (961 aa).

Residues 1-67 constitute a mitochondrion transit peptide; that stretch reads MAGGTGCVRL…SPAAAGHWRG (67 aa). Disordered stretches follow at residues 76–103 and 220–262; these read GGGA…GSAG and QLEV…VVVG. One can recognise a Lon N-terminal domain in the interval 125–371; that stretch reads LPLIAVTRNP…KALSLLKKEF (247 aa). Basic residues predominate over residues 235–244; sequence KLRKKPKRGK. A compositionally biased stretch (basic and acidic residues) spans 245-257; the sequence is KEAEEDGATKRPL. Residue 524–531 participates in ATP binding; that stretch reads GPPGVGKT. Positions 760 to 951 constitute a Lon proteolytic domain; that stretch reads VTPPGVVMGL…REIFDIAFPE (192 aa). The segment covering 784–801 has biased composition (basic and acidic residues); it reads SLRRPRDRDSDKGDKDGS. The interval 784 to 803 is disordered; sequence SLRRPRDRDSDKGDKDGSLE. Active-site residues include Ser-857 and Lys-900.

It belongs to the peptidase S16 family. As to quaternary structure, homohexamer. Organized in a ring with a central cavity. The ATP-binding and proteolytic domains (AP-domain) form a hexameric chamber, while the N-terminal domain is arranged as a trimer of dimers. DNA and RNA binding is stimulated by substrate and inhibited by ATP binding. Interacts with TWNK and mitochondrial DNA polymerase subunit POLG.

It is found in the mitochondrion matrix. The catalysed reaction is Hydrolysis of proteins in presence of ATP.. Its function is as follows. ATP-dependent serine protease that mediates the selective degradation of misfolded, unassembled or oxidatively damaged polypeptides as well as certain short-lived regulatory proteins in the mitochondrial matrix. Endogenous substrates include mitochondrial steroidogenic acute regulatory (StAR) protein, DELE1, helicase Twinkle (TWNK) and the large ribosomal subunit protein MRPL32/bL32m. MRPL32/bL32m is protected from degradation by LONP1 when it is bound to a nucleic acid (RNA), but TWNK is not. May also have a chaperone function in the assembly of inner membrane protein complexes. Participates in the regulation of mitochondrial gene expression and in the maintenance of the integrity of the mitochondrial genome. Binds to mitochondrial promoters and RNA in a single-stranded, site-specific, and strand-specific manner. May regulate mitochondrial DNA replication and/or gene expression using site-specific, single-stranded DNA binding to target the degradation of regulatory proteins binding to adjacent sites in mitochondrial promoters. This Bos taurus (Bovine) protein is Lon protease homolog, mitochondrial.